Reading from the N-terminus, the 1342-residue chain is DNA-directed RNA polymerase subunit beta (1342 aa).

Belongs to the RNA polymerase beta chain family. The RNAP catalytic core consists of 2 alpha, 1 beta, 1 beta' and 1 omega subunit. When a sigma factor is associated with the core the holoenzyme is formed, which can initiate transcription.

The enzyme catalyses RNA(n) + a ribonucleoside 5'-triphosphate = RNA(n+1) + diphosphate. Functionally, DNA-dependent RNA polymerase catalyzes the transcription of DNA into RNA using the four ribonucleoside triphosphates as substrates. This Cronobacter sakazakii (strain ATCC BAA-894) (Enterobacter sakazakii) protein is DNA-directed RNA polymerase subunit beta.